The sequence spans 361 residues: MDEMFDKLQAVADRYDELNELISDPEVIADTQRFMALSKEEGELRETVDKYHQYQDVTQQIADDDEMLHDKLDADMESMIKDELKELTAQKAALEEDIKVLLLPKDPNDDKNIIMEIHGAAGGDEASLFAADLFSMYSKYAERQGWQIEVVDENATEVGGFKEIVMMITGNKVYSKLKYENGAHRVQRVPVTESAGRVHTSTATVGVMPEEEDVDIDIDPKDIRTDVYRSSGAGGQHINKTSSAVRMTHLPTGIVVAMQDERSQQQNRAKAMQILRARVYDYYKQQEESAYNAERKSAVGTGDRSERIRTYNYPQNRVTDHRIGLTLNKLDRIMNGELDDIIDALIVSDQAAKLEDLKNNG.

The residue at position 236 (Gln236) is an N5-methylglutamine.

This sequence belongs to the prokaryotic/mitochondrial release factor family. Methylated by PrmC. Methylation increases the termination efficiency of RF1.

The protein resides in the cytoplasm. In terms of biological role, peptide chain release factor 1 directs the termination of translation in response to the peptide chain termination codons UAG and UAA. The chain is Peptide chain release factor 1 from Levilactobacillus brevis (strain ATCC 367 / BCRC 12310 / CIP 105137 / JCM 1170 / LMG 11437 / NCIMB 947 / NCTC 947) (Lactobacillus brevis).